A 123-amino-acid polypeptide reads, in one-letter code: Small ribosomal subunit protein uS12 (123 aa).

3-methylthioaspartic acid is present on D89.

Belongs to the universal ribosomal protein uS12 family. Part of the 30S ribosomal subunit. Contacts proteins S8 and S17. May interact with IF1 in the 30S initiation complex.

Functionally, with S4 and S5 plays an important role in translational accuracy. Interacts with and stabilizes bases of the 16S rRNA that are involved in tRNA selection in the A site and with the mRNA backbone. Located at the interface of the 30S and 50S subunits, it traverses the body of the 30S subunit contacting proteins on the other side and probably holding the rRNA structure together. The combined cluster of proteins S8, S12 and S17 appears to hold together the shoulder and platform of the 30S subunit. The protein is Small ribosomal subunit protein uS12 of Methylobacterium radiotolerans (strain ATCC 27329 / DSM 1819 / JCM 2831 / NBRC 15690 / NCIMB 10815 / 0-1).